A 1297-amino-acid polypeptide reads, in one-letter code: DNA-directed RNA polymerase subunit beta'' (1297 aa).

Residues Cys-220, Cys-293, Cys-300, and Cys-303 each contribute to the Zn(2+) site. Over residues 1278 to 1288 (RRRKQNTKTRK) the composition is skewed to basic residues. Residues 1278-1297 (RRRKQNTKTRKNNLFSLNEK) are disordered.

The protein belongs to the RNA polymerase beta' chain family. RpoC2 subfamily. In terms of assembly, in plastids the minimal PEP RNA polymerase catalytic core is composed of four subunits: alpha, beta, beta', and beta''. When a (nuclear-encoded) sigma factor is associated with the core the holoenzyme is formed, which can initiate transcription. Zn(2+) is required as a cofactor.

It is found in the plastid. Its subcellular location is the chloroplast. It carries out the reaction RNA(n) + a ribonucleoside 5'-triphosphate = RNA(n+1) + diphosphate. Functionally, DNA-dependent RNA polymerase catalyzes the transcription of DNA into RNA using the four ribonucleoside triphosphates as substrates. This Welwitschia mirabilis (Tree tumbo) protein is DNA-directed RNA polymerase subunit beta''.